The chain runs to 621 residues: Amino-acid acetyltransferase, mitochondrial (621 aa).

A mitochondrion-targeting transit peptide spans Met-1–Gln-77. The segment at Pro-213–Tyr-233 is disordered. In terms of domain architecture, N-acetyltransferase spans Leu-424–Asp-600.

The protein belongs to the acetyltransferase family.

Its subcellular location is the mitochondrion. It carries out the reaction L-glutamate + acetyl-CoA = N-acetyl-L-glutamate + CoA + H(+). Its pathway is amino-acid biosynthesis; L-arginine biosynthesis; N(2)-acetyl-L-ornithine from L-glutamate: step 1/4. In terms of biological role, N-acetylglutamate synthase involved in arginine biosynthesis. This Coprinopsis cinerea (strain Okayama-7 / 130 / ATCC MYA-4618 / FGSC 9003) (Inky cap fungus) protein is Amino-acid acetyltransferase, mitochondrial (ARG2).